Consider the following 264-residue polypeptide: Ribosomal RNA small subunit methyltransferase A (264 aa).

Positions 15, 17, 42, 63, 88, and 109 each coordinate S-adenosyl-L-methionine.

The protein belongs to the class I-like SAM-binding methyltransferase superfamily. rRNA adenine N(6)-methyltransferase family. RsmA subfamily.

It is found in the cytoplasm. It carries out the reaction adenosine(1518)/adenosine(1519) in 16S rRNA + 4 S-adenosyl-L-methionine = N(6)-dimethyladenosine(1518)/N(6)-dimethyladenosine(1519) in 16S rRNA + 4 S-adenosyl-L-homocysteine + 4 H(+). In terms of biological role, specifically dimethylates two adjacent adenosines (A1518 and A1519) in the loop of a conserved hairpin near the 3'-end of 16S rRNA in the 30S particle. May play a critical role in biogenesis of 30S subunits. The polypeptide is Ribosomal RNA small subunit methyltransferase A (Nitrosococcus oceani (strain ATCC 19707 / BCRC 17464 / JCM 30415 / NCIMB 11848 / C-107)).